A 469-amino-acid chain; its full sequence is Aspartyl/glutamyl-tRNA(Asn/Gln) amidotransferase subunit B (469 aa).

Belongs to the GatB/GatE family. GatB subfamily. As to quaternary structure, heterotrimer of A, B and C subunits.

It catalyses the reaction L-glutamyl-tRNA(Gln) + L-glutamine + ATP + H2O = L-glutaminyl-tRNA(Gln) + L-glutamate + ADP + phosphate + H(+). The catalysed reaction is L-aspartyl-tRNA(Asn) + L-glutamine + ATP + H2O = L-asparaginyl-tRNA(Asn) + L-glutamate + ADP + phosphate + 2 H(+). Its function is as follows. Allows the formation of correctly charged Asn-tRNA(Asn) or Gln-tRNA(Gln) through the transamidation of misacylated Asp-tRNA(Asn) or Glu-tRNA(Gln) in organisms which lack either or both of asparaginyl-tRNA or glutaminyl-tRNA synthetases. The reaction takes place in the presence of glutamine and ATP through an activated phospho-Asp-tRNA(Asn) or phospho-Glu-tRNA(Gln). The polypeptide is Aspartyl/glutamyl-tRNA(Asn/Gln) amidotransferase subunit B (Methanococcus vannielii (strain ATCC 35089 / DSM 1224 / JCM 13029 / OCM 148 / SB)).